The following is a 484-amino-acid chain: Cobyric acid synthase (484 aa).

Residues 249 to 438 (QLRVAVPVFT…LHGIFDRPET (190 aa)) form the GATase cobBQ-type domain. Catalysis depends on Cys330, which acts as the Nucleophile. The active site involves His430.

This sequence belongs to the CobB/CobQ family. CobQ subfamily.

The protein operates within cofactor biosynthesis; adenosylcobalamin biosynthesis. Catalyzes amidations at positions B, D, E, and G on adenosylcobyrinic A,C-diamide. NH(2) groups are provided by glutamine, and one molecule of ATP is hydrogenolyzed for each amidation. In Vibrio cholerae serotype O1 (strain ATCC 39541 / Classical Ogawa 395 / O395), this protein is Cobyric acid synthase.